A 288-amino-acid polypeptide reads, in one-letter code: Elongation factor Ts (288 aa).

The interval 82 to 85 is involved in Mg(2+) ion dislocation from EF-Tu; it reads TDFV.

It belongs to the EF-Ts family.

The protein localises to the cytoplasm. Associates with the EF-Tu.GDP complex and induces the exchange of GDP to GTP. It remains bound to the aminoacyl-tRNA.EF-Tu.GTP complex up to the GTP hydrolysis stage on the ribosome. In Chlorobaculum tepidum (strain ATCC 49652 / DSM 12025 / NBRC 103806 / TLS) (Chlorobium tepidum), this protein is Elongation factor Ts.